The sequence spans 456 residues: Bifunctional protein GlmU (456 aa).

The pyrophosphorylase stretch occupies residues 1-229 (MLNNAMSVVI…LSEVEGVNNR (229 aa)). Residues 11 to 14 (LAAG), Lys-25, Gln-76, 81 to 82 (GT), 103 to 105 (YGD), Gly-140, Glu-154, Asn-169, and Asn-227 each bind UDP-N-acetyl-alpha-D-glucosamine. Asp-105 contacts Mg(2+). Mg(2+) is bound at residue Asn-227. Residues 230-250 (LQLSRLERVYQSEQAEKLLLA) are linker. Residues 251–456 (GVMLRDPARF…EGWRRPVKKK (206 aa)) form an N-acetyltransferase region. The UDP-N-acetyl-alpha-D-glucosamine site is built by Arg-333 and Lys-351. The active-site Proton acceptor is His-363. The UDP-N-acetyl-alpha-D-glucosamine site is built by Tyr-366 and Asn-377. Residues Ala-380, 386-387 (NY), Ser-405, Ala-423, and Arg-440 each bind acetyl-CoA.

It in the N-terminal section; belongs to the N-acetylglucosamine-1-phosphate uridyltransferase family. The protein in the C-terminal section; belongs to the transferase hexapeptide repeat family. As to quaternary structure, homotrimer. Requires Mg(2+) as cofactor.

The protein resides in the cytoplasm. The enzyme catalyses alpha-D-glucosamine 1-phosphate + acetyl-CoA = N-acetyl-alpha-D-glucosamine 1-phosphate + CoA + H(+). The catalysed reaction is N-acetyl-alpha-D-glucosamine 1-phosphate + UTP + H(+) = UDP-N-acetyl-alpha-D-glucosamine + diphosphate. It participates in nucleotide-sugar biosynthesis; UDP-N-acetyl-alpha-D-glucosamine biosynthesis; N-acetyl-alpha-D-glucosamine 1-phosphate from alpha-D-glucosamine 6-phosphate (route II): step 2/2. It functions in the pathway nucleotide-sugar biosynthesis; UDP-N-acetyl-alpha-D-glucosamine biosynthesis; UDP-N-acetyl-alpha-D-glucosamine from N-acetyl-alpha-D-glucosamine 1-phosphate: step 1/1. The protein operates within bacterial outer membrane biogenesis; LPS lipid A biosynthesis. Catalyzes the last two sequential reactions in the de novo biosynthetic pathway for UDP-N-acetylglucosamine (UDP-GlcNAc). The C-terminal domain catalyzes the transfer of acetyl group from acetyl coenzyme A to glucosamine-1-phosphate (GlcN-1-P) to produce N-acetylglucosamine-1-phosphate (GlcNAc-1-P), which is converted into UDP-GlcNAc by the transfer of uridine 5-monophosphate (from uridine 5-triphosphate), a reaction catalyzed by the N-terminal domain. The chain is Bifunctional protein GlmU from Escherichia coli O6:K15:H31 (strain 536 / UPEC).